The sequence spans 896 residues: Desmocollin-3 (896 aa).

A signal peptide spans 1-31; that stretch reads MVVPEFRSPQCRALCTKLLLTLWVFSFVGEA. The propeptide occupies 32–135; sequence CKKVTFHVPS…KETVLRRSKR (104 aa). 5 Cadherin domains span residues 136 to 243, 244 to 355, 356 to 472, 473 to 580, and 581 to 691; these read RWAP…YPLF, TEAI…APTF, RQNT…GPEC, KPPE…EIIQ, and DYIV…TLGK. The Extracellular segment spans residues 136–695; the sequence is RWAPIPCSMQ…GITLGKWAIL (560 aa). A glycan (N-linked (GlcNAc...) asparagine) is linked at N166. N-linked (GlcNAc...) asparagine glycosylation is found at N392 and N547. N-linked (GlcNAc...) (high mannose) asparagine glycosylation is present at N630. The chain crosses the membrane as a helical span at residues 696–716; that stretch reads AILLGIALLFSVLLTLVCGVV. The Cytoplasmic portion of the chain corresponds to 717 to 896; that stretch reads TARKGKHFPE…LTLAETCTKR (180 aa).

In terms of assembly, may form homodimers. Interacts with DSG1; there is evidence to suggest that the interaction promotes cell-cell adhesion of keratinocytes. Expressed in the basal layers of epidermal stratified epithelia from birth (at protein level).

The protein resides in the cell membrane. Its subcellular location is the cell junction. It is found in the desmosome. The protein localises to the cytoplasm. A component of desmosome cell-cell junctions which are required for positive regulation of cellular adhesion. Required for cell-cell adhesion in the epidermis, as a result required for the maintenance of the dermal cohesion and the dermal barrier function. Required for cell-cell adhesion of epithelial cell layers surrounding the telogen hair club, as a result plays an important role in telogen hair shaft anchorage. Essential for successful completion of embryo compaction and development beyond the 8-cell stage. This Mus musculus (Mouse) protein is Desmocollin-3 (Dsc3).